We begin with the raw amino-acid sequence, 490 residues long: Glucose-6-phosphate 1-dehydrogenase (490 aa).

NADP(+) contacts are provided by residues Arg49, 91–92 (DV), and Lys146. 4 residues coordinate substrate: His176, Lys180, Glu214, and Asp233. His238 (proton acceptor) is an active-site residue. Substrate contacts are provided by Lys338 and Lys343.

It belongs to the glucose-6-phosphate dehydrogenase family.

It catalyses the reaction D-glucose 6-phosphate + NADP(+) = 6-phospho-D-glucono-1,5-lactone + NADPH + H(+). It participates in carbohydrate degradation; pentose phosphate pathway; D-ribulose 5-phosphate from D-glucose 6-phosphate (oxidative stage): step 1/3. Functionally, catalyzes the oxidation of glucose 6-phosphate to 6-phosphogluconolactone. The polypeptide is Glucose-6-phosphate 1-dehydrogenase (Buchnera aphidicola subsp. Schizaphis graminum (strain Sg)).